The following is a 320-amino-acid chain: Polycomb complex protein BMI-1-A (320 aa).

The segment at 18 to 57 adopts an RING-type zinc-finger fold; the sequence is CVLCGGYFIDATTIIECLHSFCKMCIVRYLETSKYCPICD. The short motif at 81–95 is the Nuclear localization signal element; it reads KLVPGLFKNEMKRRR. A disordered region spans residues 234–320; it reads ITHPQEGLNN…ALNGSSTSSG (87 aa). Positions 262–281 are enriched in low complexity; sequence VPSTSSPLPSPSTLVQPSQP. Residues 285-304 show a composition bias toward polar residues; sequence HISSPINGTTMTSPNRQFNF.

In terms of assembly, component of a PRC1-like complex. Homodimer. Interacts with cbx2.

The protein resides in the nucleus. In terms of biological role, component of a Polycomb group (PcG) multiprotein PRC1-like complex, a complex class required to maintain the transcriptionally repressive state of many genes, including Hox genes, throughout development. PcG PRC1 complex acts via chromatin remodeling and modification of histones; it mediates monoubiquitination of histone H2A 'Lys-119', rendering chromatin heritably changed in its expressibility. In the PRC1 complex, it is required to stimulate the E3 ubiquitin-protein ligase activity of rnf2. The sequence is that of Polycomb complex protein BMI-1-A (bmi1a) from Danio rerio (Zebrafish).